Consider the following 170-residue polypeptide: Adenine phosphoribosyltransferase (170 aa).

It belongs to the purine/pyrimidine phosphoribosyltransferase family. In terms of assembly, homodimer.

The protein localises to the cytoplasm. It carries out the reaction AMP + diphosphate = 5-phospho-alpha-D-ribose 1-diphosphate + adenine. The protein operates within purine metabolism; AMP biosynthesis via salvage pathway; AMP from adenine: step 1/1. Its function is as follows. Catalyzes a salvage reaction resulting in the formation of AMP, that is energically less costly than de novo synthesis. The protein is Adenine phosphoribosyltransferase of Bacillus licheniformis (strain ATCC 14580 / DSM 13 / JCM 2505 / CCUG 7422 / NBRC 12200 / NCIMB 9375 / NCTC 10341 / NRRL NRS-1264 / Gibson 46).